We begin with the raw amino-acid sequence, 450 residues long: UDP-N-acetylmuramoylalanine--D-glutamate ligase (450 aa).

Position 119–125 (119–125 (GSNGKTT)) interacts with ATP.

This sequence belongs to the MurCDEF family.

It is found in the cytoplasm. It carries out the reaction UDP-N-acetyl-alpha-D-muramoyl-L-alanine + D-glutamate + ATP = UDP-N-acetyl-alpha-D-muramoyl-L-alanyl-D-glutamate + ADP + phosphate + H(+). The protein operates within cell wall biogenesis; peptidoglycan biosynthesis. Cell wall formation. Catalyzes the addition of glutamate to the nucleotide precursor UDP-N-acetylmuramoyl-L-alanine (UMA). In Streptococcus pneumoniae (strain CGSP14), this protein is UDP-N-acetylmuramoylalanine--D-glutamate ligase.